The sequence spans 342 residues: Ferredoxin--NADP reductase (342 aa).

Residues C17, D36, Q44, Y49, V89, F124, D289, and T330 each coordinate FAD.

It belongs to the ferredoxin--NADP reductase type 2 family. Homodimer. Requires FAD as cofactor.

It catalyses the reaction 2 reduced [2Fe-2S]-[ferredoxin] + NADP(+) + H(+) = 2 oxidized [2Fe-2S]-[ferredoxin] + NADPH. In Bradyrhizobium sp. (strain BTAi1 / ATCC BAA-1182), this protein is Ferredoxin--NADP reductase.